Reading from the N-terminus, the 86-residue chain is Large ribosomal subunit protein bL31B (86 aa).

Belongs to the bacterial ribosomal protein bL31 family. Type B subfamily. Part of the 50S ribosomal subunit.

The sequence is that of Large ribosomal subunit protein bL31B from Salmonella paratyphi A (strain ATCC 9150 / SARB42).